A 944-amino-acid polypeptide reads, in one-letter code: Leucine--tRNA ligase 2 (944 aa).

The 'HIGH' region signature appears at 36–46 (PYPNSPWHIGH). Residues 623–627 (KMSKS) carry the 'KMSKS' region motif. Position 626 (Lys626) interacts with ATP.

Belongs to the class-I aminoacyl-tRNA synthetase family.

The protein localises to the cytoplasm. It carries out the reaction tRNA(Leu) + L-leucine + ATP = L-leucyl-tRNA(Leu) + AMP + diphosphate. In Saccharolobus solfataricus (strain ATCC 35092 / DSM 1617 / JCM 11322 / P2) (Sulfolobus solfataricus), this protein is Leucine--tRNA ligase 2.